The chain runs to 288 residues: Acetyl-coenzyme A carboxylase carboxyl transferase subunit beta (288 aa).

A CoA carboxyltransferase N-terminal domain is found at 32–288 (LLLICPKCKK…ILMLHNVEAR (257 aa)). Zn(2+) is bound by residues cysteine 36, cysteine 39, cysteine 55, and cysteine 58. A C4-type zinc finger spans residues 36–58 (CPKCKKTLLKSELADNLDVCREC).

The protein belongs to the AccD/PCCB family. As to quaternary structure, acetyl-CoA carboxylase is a heterohexamer composed of biotin carboxyl carrier protein (AccB), biotin carboxylase (AccC) and two subunits each of ACCase subunit alpha (AccA) and ACCase subunit beta (AccD). Requires Zn(2+) as cofactor.

The protein resides in the cytoplasm. The enzyme catalyses N(6)-carboxybiotinyl-L-lysyl-[protein] + acetyl-CoA = N(6)-biotinyl-L-lysyl-[protein] + malonyl-CoA. The protein operates within lipid metabolism; malonyl-CoA biosynthesis; malonyl-CoA from acetyl-CoA: step 1/1. In terms of biological role, component of the acetyl coenzyme A carboxylase (ACC) complex. Biotin carboxylase (BC) catalyzes the carboxylation of biotin on its carrier protein (BCCP) and then the CO(2) group is transferred by the transcarboxylase to acetyl-CoA to form malonyl-CoA. In Ruminiclostridium cellulolyticum (strain ATCC 35319 / DSM 5812 / JCM 6584 / H10) (Clostridium cellulolyticum), this protein is Acetyl-coenzyme A carboxylase carboxyl transferase subunit beta.